Reading from the N-terminus, the 258-residue chain is Global transcriptional regulator CodY (258 aa).

The GAF domain stretch occupies residues 1–156; it reads MSILLNKTRK…SATIVGLEIL (156 aa). Residues 204-223 constitute a DNA-binding region (H-T-H motif); sequence ASKIADKVGITRSVIVNALR.

It belongs to the CodY family.

It is found in the cytoplasm. Its function is as follows. DNA-binding global transcriptional regulator which is involved in the adaptive response to starvation and acts by directly or indirectly controlling the expression of numerous genes in response to nutrient availability. During rapid exponential growth, CodY is highly active and represses genes whose products allow adaptation to nutrient depletion. This is Global transcriptional regulator CodY from Clostridium acetobutylicum (strain ATCC 824 / DSM 792 / JCM 1419 / IAM 19013 / LMG 5710 / NBRC 13948 / NRRL B-527 / VKM B-1787 / 2291 / W).